A 591-amino-acid chain; its full sequence is Aspartate--tRNA ligase (591 aa).

Residue Glu-175 participates in L-aspartate binding. The segment at 199 to 202 (QLFK) is aspartate. Residue Arg-221 coordinates L-aspartate. Residues 221–223 (RDE) and Gln-230 each bind ATP. His-449 serves as a coordination point for L-aspartate. Glu-483 contributes to the ATP binding site. Arg-490 lines the L-aspartate pocket. An ATP-binding site is contributed by 535–538 (GLDR).

Belongs to the class-II aminoacyl-tRNA synthetase family. Type 1 subfamily. In terms of assembly, homodimer.

It is found in the cytoplasm. The catalysed reaction is tRNA(Asp) + L-aspartate + ATP = L-aspartyl-tRNA(Asp) + AMP + diphosphate. In terms of biological role, catalyzes the attachment of L-aspartate to tRNA(Asp) in a two-step reaction: L-aspartate is first activated by ATP to form Asp-AMP and then transferred to the acceptor end of tRNA(Asp). In Oceanobacillus iheyensis (strain DSM 14371 / CIP 107618 / JCM 11309 / KCTC 3954 / HTE831), this protein is Aspartate--tRNA ligase.